A 392-amino-acid chain; its full sequence is Chaperone protein DnaJ (392 aa).

The 71-residue stretch at 5-75 folds into the J domain; that stretch reads DYYEVLGIDK…QKKQQYDQFG (71 aa). The segment at 148-229 adopts a CR-type zinc-finger fold; it reads GVEKTIKYKR…CHGTGTAKET (82 aa). Residues C161, C164, C177, C180, C203, C206, C217, and C220 each coordinate Zn(2+). CXXCXGXG motif repeat units follow at residues 161-168, 177-184, 203-210, and 217-224; these read CENCHGTG, CPTCNGQG, CPDCHGTG, and CKHCHGTG.

It belongs to the DnaJ family. In terms of assembly, homodimer. The cofactor is Zn(2+).

It is found in the cytoplasm. Its function is as follows. Participates actively in the response to hyperosmotic and heat shock by preventing the aggregation of stress-denatured proteins and by disaggregating proteins, also in an autonomous, DnaK-independent fashion. Unfolded proteins bind initially to DnaJ; upon interaction with the DnaJ-bound protein, DnaK hydrolyzes its bound ATP, resulting in the formation of a stable complex. GrpE releases ADP from DnaK; ATP binding to DnaK triggers the release of the substrate protein, thus completing the reaction cycle. Several rounds of ATP-dependent interactions between DnaJ, DnaK and GrpE are required for fully efficient folding. Also involved, together with DnaK and GrpE, in the DNA replication of plasmids through activation of initiation proteins. In Fusobacterium nucleatum subsp. nucleatum (strain ATCC 25586 / DSM 15643 / BCRC 10681 / CIP 101130 / JCM 8532 / KCTC 2640 / LMG 13131 / VPI 4355), this protein is Chaperone protein DnaJ.